Here is a 394-residue protein sequence, read N- to C-terminus: Keratin, type I cuticular Ha4 (394 aa).

Positions Met1–Glu56 are head. The IF rod domain maps to Glu56–Leu367. The segment at Lys57–Arg91 is coil 1A. Residues Ser92–Ser102 are linker 1. Residues Tyr103 to Ser203 form a coil 1B region. The segment at Gln204–Val219 is linker 12. The interval Asp220–Glu363 is coil 2. The tail stretch occupies residues Asp364–Asn394.

Belongs to the intermediate filament family. Expressed in the hair follicles.

This chain is Keratin, type I cuticular Ha4 (KRT34), found in Homo sapiens (Human).